Reading from the N-terminus, the 311-residue chain is tRNA(Ile)-lysidine synthase (311 aa).

ATP is bound at residue 31-36 (SGGKDS).

Belongs to the tRNA(Ile)-lysidine synthase family.

The protein resides in the cytoplasm. The catalysed reaction is cytidine(34) in tRNA(Ile2) + L-lysine + ATP = lysidine(34) in tRNA(Ile2) + AMP + diphosphate + H(+). In terms of biological role, ligates lysine onto the cytidine present at position 34 of the AUA codon-specific tRNA(Ile) that contains the anticodon CAU, in an ATP-dependent manner. Cytidine is converted to lysidine, thus changing the amino acid specificity of the tRNA from methionine to isoleucine. This is tRNA(Ile)-lysidine synthase from Petrotoga mobilis (strain DSM 10674 / SJ95).